Here is a 161-residue protein sequence, read N- to C-terminus: MAEQNQRTNTPDNGSEFAIQRLYIKDLSFEAPRSPQVFLEEWQPELNMDLATKVNDLGEDNHEVVLTVTVTVTMKESHIFLAEVQQGGIFTIKNFPKEEMRPMLGSFCPNILYPYAREAITDMVVRGGFPQLYLAPVNFDALFEQHEQSEEGNSGTEDRVH.

This sequence belongs to the SecB family. As to quaternary structure, homotetramer, a dimer of dimers. One homotetramer interacts with 1 SecA dimer.

It localises to the cytoplasm. Functionally, one of the proteins required for the normal export of preproteins out of the cell cytoplasm. It is a molecular chaperone that binds to a subset of precursor proteins, maintaining them in a translocation-competent state. It also specifically binds to its receptor SecA. This Coxiella burnetii (strain CbuG_Q212) (Coxiella burnetii (strain Q212)) protein is Protein-export protein SecB.